Consider the following 254-residue polypeptide: MQALIFDVDGTLADTETAHLQAFNAAFAEVGLDWHWDAPLYTRLLKVAGGKERLMHYWRMVDPEEARGCKVKETIDAVHAIKTRHYAERVGAGGLPLRPGIARLIAEAGEAGLPLAIATTTTPANLDALLQAHLGADWRGRFAAICDAGTTAIKKPAPDVYLAVLERLGLEAGDCLAIEDSGNGLRAARAAGIPTVVTPTTFSAQDSFEGALLVLPHLGDPAEPMPQHVPGAAHRWADLAALRAWHHGTLIEAT.

Belongs to the HAD-like hydrolase superfamily. CbbY/CbbZ/Gph/YieH family.

The polypeptide is Protein CbbY, plasmid (cbbYP) (Cupriavidus necator (strain ATCC 17699 / DSM 428 / KCTC 22496 / NCIMB 10442 / H16 / Stanier 337) (Ralstonia eutropha)).